The chain runs to 257 residues: Indole-3-glycerol phosphate synthase (257 aa).

The protein belongs to the TrpC family.

The catalysed reaction is 1-(2-carboxyphenylamino)-1-deoxy-D-ribulose 5-phosphate + H(+) = (1S,2R)-1-C-(indol-3-yl)glycerol 3-phosphate + CO2 + H2O. It functions in the pathway amino-acid biosynthesis; L-tryptophan biosynthesis; L-tryptophan from chorismate: step 4/5. In Chlorobium chlorochromatii (strain CaD3), this protein is Indole-3-glycerol phosphate synthase.